A 1100-amino-acid polypeptide reads, in one-letter code: DNA-directed RNA polymerase subunit beta (1100 aa).

Residues 1064–1100 (YEEDKEVDLMADVNQRRTPSRPTYESMSVGDIDDDDD) are disordered. Residues 1079–1089 (RRTPSRPTYES) are compositionally biased toward polar residues.

Belongs to the RNA polymerase beta chain family. As to quaternary structure, in cyanobacteria the RNAP catalytic core is composed of 2 alpha, 1 beta, 1 beta', 1 gamma and 1 omega subunit. When a sigma factor is associated with the core the holoenzyme is formed, which can initiate transcription.

It carries out the reaction RNA(n) + a ribonucleoside 5'-triphosphate = RNA(n+1) + diphosphate. Functionally, DNA-dependent RNA polymerase catalyzes the transcription of DNA into RNA using the four ribonucleoside triphosphates as substrates. In Synechococcus elongatus (strain ATCC 33912 / PCC 7942 / FACHB-805) (Anacystis nidulans R2), this protein is DNA-directed RNA polymerase subunit beta.